The chain runs to 68 residues: uncharacterized protein (68 aa).

The N-terminal stretch at 1-27 (MKGLLCFIYILSAILIGCVFLNKDVEA) is a signal peptide.

This is an uncharacterized protein from Invertebrate iridescent virus 6 (IIV-6).